We begin with the raw amino-acid sequence, 485 residues long: Cysteine--tRNA ligase (485 aa).

Cys27 serves as a coordination point for Zn(2+). The short motif at 29-39 (ITAYDLCHIGH) is the 'HIGH' region element. 3 residues coordinate Zn(2+): Cys208, His233, and Glu237. The 'KMSKS' region signature appears at 265–269 (KMSKS). Residue Lys268 participates in ATP binding.

This sequence belongs to the class-I aminoacyl-tRNA synthetase family. Monomer. Requires Zn(2+) as cofactor.

It is found in the cytoplasm. It carries out the reaction tRNA(Cys) + L-cysteine + ATP = L-cysteinyl-tRNA(Cys) + AMP + diphosphate. This chain is Cysteine--tRNA ligase, found in Nitratidesulfovibrio vulgaris (strain ATCC 29579 / DSM 644 / CCUG 34227 / NCIMB 8303 / VKM B-1760 / Hildenborough) (Desulfovibrio vulgaris).